Reading from the N-terminus, the 117-residue chain is Small ribosomal subunit protein uS19c (117 aa).

The protein belongs to the universal ribosomal protein uS19 family.

The protein localises to the plastid. Its function is as follows. Protein S19 forms a complex with S13 that binds strongly to the 16S ribosomal RNA. The chain is Small ribosomal subunit protein uS19c (rps19) from Helicosporidium sp. subsp. Simulium jonesii (Green alga).